Reading from the N-terminus, the 43-residue chain is Protein PsbN (43 aa).

A helical transmembrane segment spans residues 5-27 (ALVAISISRLLVSFTGYALYTAF).

Belongs to the PsbN family.

It localises to the plastid. Its subcellular location is the chloroplast thylakoid membrane. May play a role in photosystem I and II biogenesis. The sequence is that of Protein PsbN from Bowenia serrulata (Byfield fern).